The chain runs to 634 residues: Kinesin-like protein KIF22 (634 aa).

The Kinesin motor domain maps to 19-345 (RVRVAVRLRP…LNFAAKSKQI (327 aa)). 103–110 (GPTGAGKT) serves as a coordination point for ATP. The segment at 357–406 (APTIAPGKRTREEQEAGGSGEPQNKRSKEGKKAEHSPSPPLHPQSSPDSS) is disordered. The span at 379 to 391 (QNKRSKEGKKAEH) shows a compositional bias: basic and acidic residues. Residues 421–471 (SAERERLNLLKTVAQSRKEIQMLKEKQKELEDKANMFNKQKETTEKESKDA) adopt a coiled-coil conformation.

This sequence belongs to the TRAFAC class myosin-kinesin ATPase superfamily. Kinesin family. In terms of processing, ubiquitinated, leading to its subsequent proteasomal degradation.

Its subcellular location is the nucleus. It localises to the cytoplasm. The protein resides in the cytoskeleton. Kinesin family member that is involved in spindle formation and the movements of chromosomes during mitosis and meiosis. Binds to microtubules and to DNA. This is Kinesin-like protein KIF22 (kif22) from Danio rerio (Zebrafish).